Reading from the N-terminus, the 279-residue chain is Glutamate racemase (279 aa).

Residues 13–14 and 45–46 contribute to the substrate site; these read DS and YG. Cys-76 acts as the Proton donor/acceptor in catalysis. 77–78 contributes to the substrate binding site; that stretch reads NT. Cys-185 serves as the catalytic Proton donor/acceptor. Residue 186–187 coordinates substrate; it reads TH.

This sequence belongs to the aspartate/glutamate racemases family.

The enzyme catalyses L-glutamate = D-glutamate. Its pathway is cell wall biogenesis; peptidoglycan biosynthesis. Provides the (R)-glutamate required for cell wall biosynthesis. This Synechocystis sp. (strain ATCC 27184 / PCC 6803 / Kazusa) protein is Glutamate racemase.